We begin with the raw amino-acid sequence, 702 residues long: Ribosomal RNA large subunit methyltransferase K/L (702 aa).

In terms of domain architecture, THUMP spans 43–154 (LVYQSLMWSR…KETASIALDL (112 aa)).

It belongs to the methyltransferase superfamily. RlmKL family.

Its subcellular location is the cytoplasm. It catalyses the reaction guanosine(2445) in 23S rRNA + S-adenosyl-L-methionine = N(2)-methylguanosine(2445) in 23S rRNA + S-adenosyl-L-homocysteine + H(+). It carries out the reaction guanosine(2069) in 23S rRNA + S-adenosyl-L-methionine = N(2)-methylguanosine(2069) in 23S rRNA + S-adenosyl-L-homocysteine + H(+). Its function is as follows. Specifically methylates the guanine in position 2445 (m2G2445) and the guanine in position 2069 (m7G2069) of 23S rRNA. The chain is Ribosomal RNA large subunit methyltransferase K/L from Shigella boydii serotype 18 (strain CDC 3083-94 / BS512).